Consider the following 258-residue polypeptide: Phosphate import ATP-binding protein PstB (258 aa).

Residues 5 to 247 form the ABC transporter domain; that stretch reads IDVSGLTAYY…ERIFSNPSVQ (243 aa). Position 37-44 (37-44) interacts with ATP; that stretch reads GPSGCGKS.

Belongs to the ABC transporter superfamily. Phosphate importer (TC 3.A.1.7) family. In terms of assembly, the complex is composed of two ATP-binding proteins (PstB), two transmembrane proteins (PstC and PstA) and a solute-binding protein (PstS).

It localises to the cell membrane. It carries out the reaction phosphate(out) + ATP + H2O = ADP + 2 phosphate(in) + H(+). In terms of biological role, part of the ABC transporter complex PstSACB involved in phosphate import. Responsible for energy coupling to the transport system. In Streptomyces avermitilis (strain ATCC 31267 / DSM 46492 / JCM 5070 / NBRC 14893 / NCIMB 12804 / NRRL 8165 / MA-4680), this protein is Phosphate import ATP-binding protein PstB.